The following is a 171-amino-acid chain: MISRTIRILGIDPGLRRTGWGVIDVEGNRLIFVACGTVESRESLPLSERLLAIHEGLVRVVSEHRPLEAAVEQTFVNKDGAGTLKLGQARGVAMLVPAMSGISVAEYAPNLVKKTVVGAGHADKNQIQVMLKILLPKAAPPTPDAADALAIAITHAHHRQSAMLLRKVAAL.

Catalysis depends on residues aspartate 12, glutamate 72, and aspartate 144. Aspartate 12, glutamate 72, and aspartate 144 together coordinate Mg(2+).

This sequence belongs to the RuvC family. In terms of assembly, homodimer which binds Holliday junction (HJ) DNA. The HJ becomes 2-fold symmetrical on binding to RuvC with unstacked arms; it has a different conformation from HJ DNA in complex with RuvA. In the full resolvosome a probable DNA-RuvA(4)-RuvB(12)-RuvC(2) complex forms which resolves the HJ. Requires Mg(2+) as cofactor.

It localises to the cytoplasm. It carries out the reaction Endonucleolytic cleavage at a junction such as a reciprocal single-stranded crossover between two homologous DNA duplexes (Holliday junction).. Functionally, the RuvA-RuvB-RuvC complex processes Holliday junction (HJ) DNA during genetic recombination and DNA repair. Endonuclease that resolves HJ intermediates. Cleaves cruciform DNA by making single-stranded nicks across the HJ at symmetrical positions within the homologous arms, yielding a 5'-phosphate and a 3'-hydroxyl group; requires a central core of homology in the junction. The consensus cleavage sequence is 5'-(A/T)TT(C/G)-3'. Cleavage occurs on the 3'-side of the TT dinucleotide at the point of strand exchange. HJ branch migration catalyzed by RuvA-RuvB allows RuvC to scan DNA until it finds its consensus sequence, where it cleaves and resolves the cruciform DNA. This Afipia carboxidovorans (strain ATCC 49405 / DSM 1227 / KCTC 32145 / OM5) (Oligotropha carboxidovorans) protein is Crossover junction endodeoxyribonuclease RuvC.